The chain runs to 336 residues: Sodium/bile acid cotransporter 7 (336 aa).

Over 1-10 (MGLIARVRKE) the chain is Cytoplasmic. Residues 11–31 (WFIIGIVLVITFAKLQPSVGV) form a helical membrane-spanning segment. The Extracellular segment spans residues 32-37 (KGGPLH). Residues 38 to 58 (PEITITYVAVSVIFFNSGLSL) form a helical membrane-spanning segment. At 59–71 (KTEELASALMHVK) the chain is on the cytoplasmic side. A helical transmembrane segment spans residues 72 to 92 (LHFFVQTFTLVFFPIAIWLLL). The Extracellular segment spans residues 93-116 (KVLALTAINEWLLRGLQTVACMPP). The chain crosses the membrane as a helical span at residues 117–137 (PVSSAVILTKAVGGNEAAAIF). Residue asparagine 138 is a topological domain, cytoplasmic. The chain crosses the membrane as a helical span at residues 139–159 (SAFGSFLGIVVTPLLLLVFLG). At 160 to 163 (SSSS) the chain is on the extracellular side. A helical transmembrane segment spans residues 164-184 (VPFTSIFSQLFMTVVVPLIVG). Residues 185 to 201 (QVCRRFLRECLDRRKPP) lie on the Cytoplasmic side of the membrane. Residues 202 to 222 (FGAVSSVVLLMIIYSTFCDTF) form a helical membrane-spanning segment. At 223-233 (NNPNIELDHLS) the chain is on the extracellular side. The chain crosses the membrane as a helical span at residues 234–254 (LLTVVFIIFSIQLSFMALIFF). The Cytoplasmic segment spans residues 255–270 (LSTRKSSGFSAADSVA). A helical transmembrane segment spans residues 271–291 (IMFCATHKSLTLGIPMLKIVF). Topologically, residues 292–298 (EGYEHLS) are extracellular. Residues 299–319 (LISVPLLIYHPAQILLGSVLL) traverse the membrane as a helical segment. Residues 320–336 (PSIKTWMSGRQKTLTPI) lie on the Cytoplasmic side of the membrane.

It belongs to the bile acid:sodium symporter (BASS) (TC 2.A.28) family.

Its subcellular location is the cell membrane. It localises to the endoplasmic reticulum membrane. It is found in the golgi apparatus membrane. In terms of biological role, involved in teeth and skeletal development. Has an essential role in the biosynthesis and trafficking of glycosaminoglycans and glycoproteins to produce a proper functioning extracellular matrix. Required for extracellular matrix mineralization. Also involved in the regulation of cellular calcium homeostasis. Does not show transport activity towards bile acids or steroid sulfates. This chain is Sodium/bile acid cotransporter 7 (slc10a7), found in Danio rerio (Zebrafish).